A 394-amino-acid polypeptide reads, in one-letter code: Elongation factor Tu 1 (394 aa).

Residues 10 to 204 (KPHVNVGTIG…ALDSYIPQPE (195 aa)) enclose the tr-type G domain. Positions 19 to 26 (GHVDHGKT) are G1. A GTP-binding site is contributed by 19 to 26 (GHVDHGKT). Position 26 (Thr-26) interacts with Mg(2+). A G2 region spans residues 60–64 (GITIN). The segment at 81–84 (DCPG) is G3. Residues 81–85 (DCPGH) and 136–139 (NKCD) contribute to the GTP site. The G4 stretch occupies residues 136-139 (NKCD). Residues 174-176 (SAL) are G5.

It belongs to the TRAFAC class translation factor GTPase superfamily. Classic translation factor GTPase family. EF-Tu/EF-1A subfamily. Monomer.

The protein resides in the cytoplasm. The catalysed reaction is GTP + H2O = GDP + phosphate + H(+). GTP hydrolase that promotes the GTP-dependent binding of aminoacyl-tRNA to the A-site of ribosomes during protein biosynthesis. In Yersinia pestis bv. Antiqua (strain Nepal516), this protein is Elongation factor Tu 1.